We begin with the raw amino-acid sequence, 890 residues long: DNA mismatch repair protein MutS (890 aa).

ATP is bound at residue 645–652; it reads GPNMAGKS.

The protein belongs to the DNA mismatch repair MutS family.

This protein is involved in the repair of mismatches in DNA. It is possible that it carries out the mismatch recognition step. This protein has a weak ATPase activity. The polypeptide is DNA mismatch repair protein MutS (Rickettsia conorii (strain ATCC VR-613 / Malish 7)).